A 367-amino-acid polypeptide reads, in one-letter code: Viral cathepsin (367 aa).

The N-terminal stretch at 1 to 25 is a signal peptide; that stretch reads MRKYHSNIMHKIITFVSLLWTFVVC. Positions 26–156 are cleaved as a propeptide — activation peptide; that stretch reads DEISLHTSSS…IVKGAPDIRL (131 aa). N-linked (GlcNAc...) asparagine; by host glycosylation is found at Asn103 and Asn135. 3 disulfide bridges follow: Cys177/Cys218, Cys211/Cys251, and Cys306/Cys354. Cys180 is a catalytic residue. Residues His313 and Asn333 contribute to the active site.

It belongs to the peptidase C1 family. In terms of processing, synthesized as an inactive proenzyme and activated by proteolytic removal of the inhibitory propeptide.

It catalyses the reaction Endopeptidase of broad specificity, hydrolyzing substrates of both cathepsin L and cathepsin B.. Its function is as follows. Cysteine protease that plays an essential role in host liquefaction to facilitate horizontal transmission of the virus. May participate in the degradation of foreign protein expressed by the baculovirus system. The polypeptide is Viral cathepsin (VCATH) (Lepidoptera (butterflies and moths)).